A 104-amino-acid polypeptide reads, in one-letter code: Large ribosomal subunit protein uL24 (104 aa).

The protein belongs to the universal ribosomal protein uL24 family. Part of the 50S ribosomal subunit.

In terms of biological role, one of two assembly initiator proteins, it binds directly to the 5'-end of the 23S rRNA, where it nucleates assembly of the 50S subunit. Its function is as follows. One of the proteins that surrounds the polypeptide exit tunnel on the outside of the subunit. The sequence is that of Large ribosomal subunit protein uL24 from Baumannia cicadellinicola subsp. Homalodisca coagulata.